A 639-amino-acid polypeptide reads, in one-letter code: Tubulin--tyrosine ligase-like protein 12 (639 aa).

One can recognise a TTL domain in the interval 295–639 (PQGHVFRVHC…TDNCHVTRII (345 aa)). ATP-binding positions include 445-448 (SKYI), K463, and D465.

The protein belongs to the tubulin--tyrosine ligase family. As to quaternary structure, interacts with MAVS; the interaction prevents MAVS binding to TBK1 and IKBKE. Interacts (via N-terminus) with TBK1 (via protein kinase domain). Interacts (via TTL domain) with IKBKE (via protein kinase domain). Interacts with tubulin alpha. Interacts with histone H3 and histone H4 (when trimethylated at 'Lys-20' (H4K20me3)). Interacts with CBX3. As to expression, widely expressed with highest levels in brain, kidney, liver, lung, muscle and testis.

It is found in the cytoplasm. The protein localises to the midbody. Its subcellular location is the cytoskeleton. It localises to the microtubule organizing center. The protein resides in the centrosome. It is found in the spindle. The protein localises to the nucleus. Functionally, negatively regulates post-translational modifications of tubulin, including detyrosination of the C-terminus and polyglutamylation of glutamate residues. Also, indirectly promotes histone H4 trimethylation at 'Lys-20' (H4K20me3). Probably by controlling tubulin and/or histone H4 post-translational modifications, plays a role in mitosis and in maintaining chromosome number stability. During RNA virus-mediated infection, acts as a negative regulator of the RIG-I pathway by preventing MAVS binding to TBK1 and IKBKE. The protein is Tubulin--tyrosine ligase-like protein 12 of Mus musculus (Mouse).